The following is a 364-amino-acid chain: Fructose-bisphosphate aldolase, non-muscle type (364 aa).

2 residues coordinate substrate: R56 and K147. K230 functions as the Schiff-base intermediate with dihydroxyacetone-P in the catalytic mechanism.

It belongs to the class I fructose-bisphosphate aldolase family. As to quaternary structure, homotetramer. As to expression, expressed mainly in the liver and also in brain and other tissues, except for the heart muscle.

The enzyme catalyses beta-D-fructose 1,6-bisphosphate = D-glyceraldehyde 3-phosphate + dihydroxyacetone phosphate. It participates in carbohydrate degradation; glycolysis; D-glyceraldehyde 3-phosphate and glycerone phosphate from D-glucose: step 4/4. The sequence is that of Fructose-bisphosphate aldolase, non-muscle type from Lethenteron camtschaticum (Japanese lamprey).